We begin with the raw amino-acid sequence, 232 residues long: LexA repressor (232 aa).

Polar residues predominate over residues 1–10 (MDDSNDSSSA). Residues 1–22 (MDDSNDSSSAGPDGRLHAVDPS) form a disordered region. A DNA-binding region (H-T-H motif) is located at residues 47–67 (IREIGDAVGLTSTSSVAHQLR). Active-site for autocatalytic cleavage activity residues include serine 156 and lysine 193.

This sequence belongs to the peptidase S24 family. As to quaternary structure, homodimer.

The enzyme catalyses Hydrolysis of Ala-|-Gly bond in repressor LexA.. Functionally, represses a number of genes involved in the response to DNA damage (SOS response), including recA and lexA. In the presence of single-stranded DNA, RecA interacts with LexA causing an autocatalytic cleavage which disrupts the DNA-binding part of LexA, leading to derepression of the SOS regulon and eventually DNA repair. This Mycolicibacterium paratuberculosis (strain ATCC BAA-968 / K-10) (Mycobacterium paratuberculosis) protein is LexA repressor.